The chain runs to 621 residues: Chaperone protein HscA homolog (621 aa).

This sequence belongs to the heat shock protein 70 family.

Functionally, chaperone involved in the maturation of iron-sulfur cluster-containing proteins. Has a low intrinsic ATPase activity which is markedly stimulated by HscB. This chain is Chaperone protein HscA homolog, found in Cupriavidus pinatubonensis (strain JMP 134 / LMG 1197) (Cupriavidus necator (strain JMP 134)).